A 253-amino-acid polypeptide reads, in one-letter code: Tyrosine recombinase XerD-like (253 aa).

A Core-binding (CB) domain is found at Lys8–Tyr81. A Tyr recombinase domain is found at Ser93–Thr253. Residues Lys157 and Arg218 contribute to the active site. The active-site O-(3'-phospho-DNA)-tyrosine intermediate is Tyr250.

Belongs to the 'phage' integrase family. XerD-like subfamily.

The protein resides in the cytoplasm. In terms of biological role, putative tyrosine recombinase. Not involved in the cutting and rejoining of the recombining DNA molecules on dif(SL) site. The polypeptide is Tyrosine recombinase XerD-like (Streptococcus thermophilus (strain CNRZ 1066)).